The following is a 396-amino-acid chain: Tryptophan synthase beta chain (396 aa).

Lys88 is subject to N6-(pyridoxal phosphate)lysine.

It belongs to the TrpB family. In terms of assembly, tetramer of two alpha and two beta chains. Pyridoxal 5'-phosphate is required as a cofactor.

It carries out the reaction (1S,2R)-1-C-(indol-3-yl)glycerol 3-phosphate + L-serine = D-glyceraldehyde 3-phosphate + L-tryptophan + H2O. It participates in amino-acid biosynthesis; L-tryptophan biosynthesis; L-tryptophan from chorismate: step 5/5. Its function is as follows. The beta subunit is responsible for the synthesis of L-tryptophan from indole and L-serine. The sequence is that of Tryptophan synthase beta chain from Shewanella baltica (strain OS195).